Consider the following 1220-residue polypeptide: Plasma membrane calcium-transporting ATPase 1 (1220 aa).

The residue at position 2 (Gly2) is an N-acetylglycine. Residues 2 to 105 (GDMANNSVAY…KTFLQLVWEA (104 aa)) are Cytoplasmic-facing. A phosphoserine mark is found at Ser8 and Ser17. The helical transmembrane segment at 106–126 (LQDVTLIILEIAAIVSLGLSF) threads the bilayer. Residues 127–154 (YQPPEGDNALCGEVSVGEEEGEGETGWI) lie on the Extracellular side of the membrane. The helical transmembrane segment at 155-175 (EGAAILLSVVCVVLVTAFNDW) threads the bilayer. At 176-366 (SKEKQFRGLQ…KEKSVLQGKL (191 aa)) the chain is on the cytoplasmic side. The tract at residues 297–356 (EEEKKDEKKKEKKNKKQDGAIENRNKAKAQDGAAMEMQPLKSEEGGDGDEKDKKKANLPK) is disordered. Basic and acidic residues-rich tracts occupy residues 312-325 (KQDG…KAKA) and 337-356 (KSEE…NLPK). Ser338 bears the Phosphoserine mark. Residues 367–386 (TKLAVQIGKAGLLMSAITVI) traverse the membrane as a helical segment. At 387-418 (ILVLYFVIDTFWVQKRPWLAECTPIYIQYFVK) the chain is on the extracellular side. A helical transmembrane segment spans residues 419-439 (FFIIGVTVLVVAVPEGLPLAV). Topologically, residues 440–855 (TISLAYSVKK…RNVYDSISKF (416 aa)) are cytoplasmic. The 4-aspartylphosphate intermediate role is filled by Asp475. Residues Asp475, Thr477, and Asp797 each coordinate Mg(2+). A helical membrane pass occupies residues 856 to 876 (LQFQLTVNVVAVIVAFTGACI). The Extracellular segment spans residues 877 to 882 (TQDSPL). Residues 883–903 (KAVQMLWVNLIMDTLASLALA) traverse the membrane as a helical segment. The Cytoplasmic segment spans residues 904-927 (TEPPTESLLLRKPYGRNKPLISRT). Residues 928–948 (MMKNILGHAFYQLVVVFTLLF) traverse the membrane as a helical segment. Topologically, residues 949–971 (AGEKFFDIDSGRNAPLHAPPSEH) are extracellular. Residues 972–991 (YTIVFNTFVLMQLFNEINAR) traverse the membrane as a helical segment. Topologically, residues 992 to 1005 (KIHGERNVFEGIFN) are cytoplasmic. The chain crosses the membrane as a helical span at residues 1006–1027 (NAIFCTIVLGTFVVQIIIVQFG). Residues 1028 to 1039 (GKPFSCSELSIE) lie on the Extracellular side of the membrane. Residues 1040–1060 (QWLWSIFLGMGTLLWGQLIST) traverse the membrane as a helical segment. Over 1061-1220 (IPTSRLKFLK…SPLHSLETSL (160 aa)) the chain is Cytoplasmic. Residues 1100-1117 (LRRGQILWFRGLNRIQTQ) form a calmodulin-binding subdomain A region. Phosphothreonine; by PKC is present on Thr1116. A required for basolateral membrane targeting region spans residues 1118–1220 (IRVVNAFRSS…SPLHSLETSL (103 aa)). A phosphoserine mark is found at Ser1140 and Ser1155. A disordered region spans residues 1160 to 1220 (PLIDDTDAED…SPLHSLETSL (61 aa)). At Thr1165 the chain carries Phosphothreonine. Ser1178 carries the phosphoserine; by PKA modification. Ser1182 is modified (phosphoserine). The segment covering 1200–1220 (MNKSATSSSPGSPLHSLETSL) has biased composition (polar residues).

The protein belongs to the cation transport ATPase (P-type) (TC 3.A.3) family. Type IIB subfamily. In terms of assembly, monomer. Dimer. Oligomer. Calmodulin binding. Interacts with PDZD11. Interacts with SLC35G1 and STIM1; inhibits calcium-transporting ATPase activity after store depletion. Interacts with YWHAE; interacts with the monomeric and dimeric forms of the YWHAE but prefer the monomer form; this interaction inhibits calcium-transporting ATPase activity. Interacts with NPTN; this interaction stabilizes ATP2B1 and increases ATPase activity; this interaction controls T cell calcium homeostasis following T cell activation. Interacts with EPB41; regulates small intestinal calcium absorption through regulation of membrane expression of ATP2B1. Isoform B: Ubiquitously expressed. Isoform C: Found in brain cortex, skeletal muscle and heart muscle. Isoform D: Has only been found in fetal skeletal muscle. Isoform K: Found in small intestine and liver. Abundantly expressed in the endometrial epithelial cells and glandular epithelial cells in early-proliferative phase and early-secretory phases.

It localises to the cell membrane. The protein localises to the basolateral cell membrane. Its subcellular location is the synapse. It is found in the presynaptic cell membrane. The protein resides in the cytoplasmic vesicle. It localises to the secretory vesicle. The protein localises to the synaptic vesicle membrane. The catalysed reaction is Ca(2+)(in) + ATP + H2O = Ca(2+)(out) + ADP + phosphate + H(+). Catalyzes the hydrolysis of ATP coupled with the transport of calcium from the cytoplasm to the extracellular space thereby maintaining intracellular calcium homeostasis. Plays a role in blood pressure regulation through regulation of intracellular calcium concentration and nitric oxide production leading to regulation of vascular smooth muscle cells vasoconstriction. Positively regulates bone mineralization through absorption of calcium from the intestine. Plays dual roles in osteoclast differentiation and survival by regulating RANKL-induced calcium oscillations in preosteoclasts and mediating calcium extrusion in mature osteoclasts. Regulates insulin sensitivity through calcium/calmodulin signaling pathway by regulating AKT1 activation and NOS3 activation in endothelial cells. May play a role in synaptic transmission by modulating calcium and proton dynamics at the synaptic vesicles. The polypeptide is Plasma membrane calcium-transporting ATPase 1 (Homo sapiens (Human)).